A 230-amino-acid chain; its full sequence is LexA repressor (230 aa).

Positions 28–48 (LREIGAHMGIRSTNGVNDHLR) form a DNA-binding region, H-T-H motif. Active-site for autocatalytic cleavage activity residues include S149 and K186.

The protein belongs to the peptidase S24 family. As to quaternary structure, homodimer.

It carries out the reaction Hydrolysis of Ala-|-Gly bond in repressor LexA.. Represses a number of genes involved in the response to DNA damage (SOS response), including recA and lexA. In the presence of single-stranded DNA, RecA interacts with LexA causing an autocatalytic cleavage which disrupts the DNA-binding part of LexA, leading to derepression of the SOS regulon and eventually DNA repair. The polypeptide is LexA repressor (Sorangium cellulosum (strain So ce56) (Polyangium cellulosum (strain So ce56))).